A 254-amino-acid chain; its full sequence is Type III pantothenate kinase (254 aa).

An ATP-binding site is contributed by 6–13; sequence DVGNSNIV. Residues Tyr100 and 107 to 110 contribute to the substrate site; that span reads GADR. Catalysis depends on Asp109, which acts as the Proton acceptor. Position 129 (Asp129) interacts with K(+). Thr132 contributes to the ATP binding site. Residue Thr184 participates in substrate binding.

The protein belongs to the type III pantothenate kinase family. As to quaternary structure, homodimer. It depends on NH4(+) as a cofactor. K(+) serves as cofactor.

The protein resides in the cytoplasm. It catalyses the reaction (R)-pantothenate + ATP = (R)-4'-phosphopantothenate + ADP + H(+). It participates in cofactor biosynthesis; coenzyme A biosynthesis; CoA from (R)-pantothenate: step 1/5. Catalyzes the phosphorylation of pantothenate (Pan), the first step in CoA biosynthesis. The sequence is that of Type III pantothenate kinase from Pelobacter propionicus (strain DSM 2379 / NBRC 103807 / OttBd1).